A 264-amino-acid polypeptide reads, in one-letter code: 3-methyl-2-oxobutanoate hydroxymethyltransferase (264 aa).

Mg(2+) is bound by residues Asp-45 and Asp-84. 3-methyl-2-oxobutanoate is bound by residues 45–46 (DS), Asp-84, and Lys-112. Glu-114 contributes to the Mg(2+) binding site. The active-site Proton acceptor is the Glu-181.

The protein belongs to the PanB family. As to quaternary structure, homodecamer; pentamer of dimers. It depends on Mg(2+) as a cofactor.

The protein localises to the cytoplasm. It catalyses the reaction 3-methyl-2-oxobutanoate + (6R)-5,10-methylene-5,6,7,8-tetrahydrofolate + H2O = 2-dehydropantoate + (6S)-5,6,7,8-tetrahydrofolate. It participates in cofactor biosynthesis; (R)-pantothenate biosynthesis; (R)-pantoate from 3-methyl-2-oxobutanoate: step 1/2. Its function is as follows. Catalyzes the reversible reaction in which hydroxymethyl group from 5,10-methylenetetrahydrofolate is transferred onto alpha-ketoisovalerate to form ketopantoate. The chain is 3-methyl-2-oxobutanoate hydroxymethyltransferase from Shewanella sp. (strain ANA-3).